Consider the following 1310-residue polypeptide: Clustered mitochondria protein homolog (1310 aa).

In terms of domain architecture, Clu spans 375 to 619 (DITRSQESYL…RVTPLDVVWQ (245 aa)). Basic and acidic residues predominate over residues 662-682 (KAQEDAANKEQPSETTESKEG). Disordered stretches follow at residues 662–692 (KAQE…EEAL) and 931–960 (VANG…SRAV). TPR repeat units lie at residues 1033-1066 (AKLY…TERT), 1075-1108 (ILAY…WKII), and 1117-1150 (ITTM…CESL). Disordered regions lie at residues 1245-1266 (VQPQ…ANAS) and 1281-1310 (GGDA…KSSA).

The protein belongs to the CLU family. In terms of assembly, may associate with the eukaryotic translation initiation factor 3 (eIF-3) complex.

It is found in the cytoplasm. Functionally, mRNA-binding protein involved in proper cytoplasmic distribution of mitochondria. In Aspergillus fumigatus (strain CBS 144.89 / FGSC A1163 / CEA10) (Neosartorya fumigata), this protein is Clustered mitochondria protein homolog.